The sequence spans 423 residues: Phosphoribosylamine--glycine ligase (423 aa).

The ATP-grasp domain maps to 107-312 (KDLCARYGIP…LLPLLYAAAT (206 aa)). Position 133–193 (133–193 (IREEGAPIVI…EAYLDGEEAS (61 aa))) interacts with ATP. Mg(2+) contacts are provided by E282 and N284.

The protein belongs to the GARS family. Mg(2+) is required as a cofactor. Mn(2+) serves as cofactor.

It catalyses the reaction 5-phospho-beta-D-ribosylamine + glycine + ATP = N(1)-(5-phospho-beta-D-ribosyl)glycinamide + ADP + phosphate + H(+). The protein operates within purine metabolism; IMP biosynthesis via de novo pathway; N(1)-(5-phospho-D-ribosyl)glycinamide from 5-phospho-alpha-D-ribose 1-diphosphate: step 2/2. This is Phosphoribosylamine--glycine ligase from Rhizobium meliloti (strain 1021) (Ensifer meliloti).